The following is a 266-amino-acid chain: 3-methyl-2-oxobutanoate hydroxymethyltransferase (266 aa).

2 residues coordinate Mg(2+): D47 and D86. Residues 47–48 (DS), D86, and K114 contribute to the 3-methyl-2-oxobutanoate site. E116 lines the Mg(2+) pocket. The active-site Proton acceptor is E183.

This sequence belongs to the PanB family. As to quaternary structure, homodecamer; pentamer of dimers. Mg(2+) is required as a cofactor.

It localises to the cytoplasm. The catalysed reaction is 3-methyl-2-oxobutanoate + (6R)-5,10-methylene-5,6,7,8-tetrahydrofolate + H2O = 2-dehydropantoate + (6S)-5,6,7,8-tetrahydrofolate. The protein operates within cofactor biosynthesis; (R)-pantothenate biosynthesis; (R)-pantoate from 3-methyl-2-oxobutanoate: step 1/2. In terms of biological role, catalyzes the reversible reaction in which hydroxymethyl group from 5,10-methylenetetrahydrofolate is transferred onto alpha-ketoisovalerate to form ketopantoate. In Idiomarina loihiensis (strain ATCC BAA-735 / DSM 15497 / L2-TR), this protein is 3-methyl-2-oxobutanoate hydroxymethyltransferase.